The sequence spans 1218 residues: NACHT, LRR and PYD domains-containing protein 1a allele 1 (1218 aa).

The tract at residues 1–61 (MEESQSKQES…SLPGWSSTSN (61 aa)) is disordered. The segment covering 7–29 (KQESNTRVAQHGSQQDVDPTFQT) has biased composition (polar residues). Residues 175-484 (QLVIIEGAAG…EFFAAMSYIL (310 aa)) form the NACHT domain. 181–188 (GAAGIGKS) contacts ATP. LRR repeat units follow at residues 343-364 (KERN…LTLC), 673-693 (NLEE…RSLC), and 730-750 (RLAE…RQLC). Residues 799 to 815 (TMPTENTDGEESLTSSK) are compositionally biased toward polar residues. Positions 799 to 842 (TMPTENTDGEESLTSSKQQQQQSGDKHMEPLGTDDDFWGPSGPV) are disordered. A ZU5 region spans residues 835-968 (FWGPSGPVST…HFAVLENPSF (134 aa)). An FIIND domain is found at 835–1118 (FWGPSGPVST…LRPALPRMAS (284 aa)). The UPA stretch occupies residues 969–1118 (SPMGVLLRMI…LRPALPRMAS (150 aa)). Residues 1122-1211 (DAPALLHFVD…HLIMDLLEKS (90 aa)) form the CARD domain.

Belongs to the NLRP family. Interacts (via LRR repeats) with BCL2 and BCL2L1 (via the loop between motifs BH4 and BH3). Interacts with NOD2; this interaction is enhanced in the presence of muramyl dipeptide (MDP) and increases IL1B release. Interacts with EIF2AK2/PKR; this interaction requires EIF2AK2 activity, is accompanied by EIF2AK2 autophosphorylation and promotes inflammasome assembly in response to danger-associated signals. Interacts with MEFV; this interaction targets Nlrp1a to degradation by autophagy, hence preventing excessive IL1B- and IL18-mediated inflammation. Interacts with DPP9; leading to inhibit activation of the inflammasome. DPP9 acts via formation of a ternary complex, composed of a DPP9 homodimer, one full-length NLRP1 protein, and one cleaved C-terminus of Nlrp1a (NACHT, LRR and PYD domains-containing protein 1a, C-terminus). Interacts with DPP8; leading to inhibit activation of the inflammasome, probably via formation of a ternary complex with DPP8. As to quaternary structure, interacts with the C-terminal part of Nlrp1a (NACHT, LRR and PYD domains-containing protein 1a, C-terminus) in absence of pathogens and other damage-associated signals. In terms of assembly, interacts with the N-terminal part of Nlrp1a (NACHT, LRR and PYD domains-containing protein 1a, N-terminus) in absence of pathogens and other damage-associated signals. Homomultimer; forms the Nlrp1a inflammasome polymeric complex, a filament composed of homopolymers of this form in response to pathogens and other damage-associated signals. The Nlrp1a inflammasome polymeric complex directly recruits pro-caspase-1 (proCASP1) independently of PYCARD/ASC. Interacts (via CARD domain) with CASP1 (via CARD domain); leading to CASP1 activation. Autocatalytically cleaved. Autocatalytic cleavage in FIIND region occurs constitutively, prior to activation signals, and is required for inflammasome activity (IL1B release), possibly by facilitating CASP1 binding. Both N- and C-terminal parts remain associated non-covalently. In terms of processing, (Microbial infection) Cleavage by B.anthracis lethal toxin (LT) endopeptidase promotes ubiquitination and degradation of the N-terminal part, releasing the cleaved C-terminal part of the protein (NACHT, LRR and PYD domains-containing protein 1a, C-terminus), which polymerizes and forms the Nlrp1a inflammasome. Post-translationally, ubiquitinated in response to pathogen-associated signals, leading to its degradation by the proteasome and subsequent release of the cleaved C-terminal part of the protein (NACHT, LRR and PYD domains-containing protein 1a, C-terminus), which polymerizes and forms the Nlrp1a inflammasome.

It localises to the cytoplasm. The protein resides in the cytosol. Its subcellular location is the nucleus. It is found in the inflammasome. Its activity is regulated as follows. Activated by cleavage by B.anthracis lethal toxin (LT) endopeptidase. Cleavage by LT promotes ubiquitination and degradation of the N-terminal part, releasing the cleaved C-terminal part of the protein (NACHT, LRR and PYD domains-containing protein 1a, C-terminus), which polymerizes and forms the Nlrp1a inflammasome. Nlrp1a inflammasome is inhibited by DPP8 and DPP9, which sequester the C-terminal fragment of Nlrp1a (NACHT, LRR and PYD domains-containing protein 1a, C-terminus) in a ternary complex, thereby preventing Nlrp1a oligomerization and activation. Nlrp1a inflammasome is weakly activated by Val-boroPro (Talabostat, PT-100), an inhibitor of dipeptidyl peptidases DPP8 and DPP9. Val-boroPro relieves inhibition of DPP8 and/or DPP9 by promoting disruption of the ternary complex, releasing its C-terminal part from autoinhibition. Weakly activated by Toxoplasma gondii. Its function is as follows. Acts as the sensor component of the Nlrp1a inflammasome, which mediates inflammasome activation in response to various pathogen-associated signals, leading to subsequent pyroptosis. Inflammasomes are supramolecular complexes that assemble in the cytosol in response to pathogens and other damage-associated signals and play critical roles in innate immunity and inflammation. Acts as a recognition receptor (PRR): recognizes specific pathogens and other damage-associated signals, such as B.anthracis lethal toxin (LT) or Val-boroPro inhibitor, and mediates the formation of the inflammasome polymeric complex. In response to pathogen-associated signals, the N-terminal part of Nlrp1a is degraded by the proteasome, releasing the cleaved C-terminal part of the protein (NACHT, LRR and PYD domains-containing protein 1a, C-terminus), which polymerizes to initiate the formation of the inflammasome complex: the inflammasome directly recruits pro-caspase-1 (proCASP1) independently of PYCARD/ASC and promotes caspase-1 (CASP1) activation, which subsequently cleaves and activates inflammatory cytokines IL1B and IL18 and gasdermin-D (GSDMD), leading to pyroptosis. In the absence of GSDMD expression, the Nlrp1a inflammasome is able to recruit and activate CASP8, leading to activation of gasdermin-E (GSDME). Constitutes the precursor of the Nlrp1a inflammasome, which mediates autoproteolytic processing within the FIIND domain to generate the N-terminal and C-terminal parts, which are associated non-covalently in absence of pathogens and other damage-associated signals. Functionally, regulatory part that prevents formation of the Nlrp1a inflammasome: in absence of pathogens and other damage-associated signals, interacts with the C-terminal part of Nlrp1a (NACHT, LRR and PYD domains-containing protein 1a, C-terminus), preventing activation of the Nlrp1a inflammasome. In response to pathogen-associated signals, this part is ubiquitinated by the N-end rule pathway and degraded by the proteasome, releasing the cleaved C-terminal part of the protein, which polymerizes and forms the Nlrp1a inflammasome. In terms of biological role, constitutes the active part of the Nlrp1a inflammasome. In absence of pathogens and other damage-associated signals, interacts with the N-terminal part of Nlrp1a (NACHT, LRR and PYD domains-containing protein 1a, N-terminus), preventing activation of the Nlrp1a inflammasome. In response to pathogen-associated signals, the N-terminal part of Nlrp1a is degraded by the proteasome, releasing this form, which polymerizes to form the Nlrp1a inflammasome complex: the Nlrp1a inflammasome complex then directly recruits pro-caspase-1 (proCASP1) and promotes caspase-1 (CASP1) activation, leading to gasdermin-D (GSDMD) cleavage and subsequent pyroptosis. The chain is NACHT, LRR and PYD domains-containing protein 1a allele 1 from Rattus norvegicus (Rat).